Consider the following 370-residue polypeptide: Probable G-protein coupled receptor 85 (370 aa).

The Extracellular segment spans residues 1–25; that stretch reads MANYSHAADNILQNLSPLTAFLKLT. The N-linked (GlcNAc...) asparagine glycan is linked to N3. A helical transmembrane segment spans residues 26 to 46; the sequence is SLGFIIGVSVVGNLLISILLA. At 47 to 57 the chain is on the cytoplasmic side; it reads KDKTLHRAPYY. The chain crosses the membrane as a helical span at residues 58–78; sequence FLLDLCCSDILRSAICFPFVF. Topologically, residues 79 to 96 are extracellular; the sequence is NSVKNGSTWTYGTLTCKV. N83 carries N-linked (GlcNAc...) asparagine glycosylation. Cysteines 94 and 172 form a disulfide. A helical membrane pass occupies residues 97-117; it reads IAFLGVLSCFHTAFMLFCISV. At 118–137 the chain is on the cytoplasmic side; that stretch reads TRYLAIAHHRFYTKRLTFWT. A helical membrane pass occupies residues 138 to 158; the sequence is CLAVICMVWTLSVAMAFPPVL. Residues 159–188 are Extracellular-facing; the sequence is DVGTYSFIREEDQCTFQHRSFRANDSLGFM. N182 carries N-linked (GlcNAc...) asparagine glycosylation. The helical transmembrane segment at 189–209 threads the bilayer; it reads LLLALILLATQLVYLKLIFFV. The Cytoplasmic portion of the chain corresponds to 210–286; it reads HDRRKMKPVQ…FKMEKRISRM (77 aa). Residues 287–307 form a helical membrane-spanning segment; that stretch reads FYIMTFLFLTLWGPYLVACYW. Residues 308–313 lie on the Extracellular side of the membrane; sequence RVFARG. A helical membrane pass occupies residues 314 to 334; sequence PVVPGGFLTAAVWMSFAQAGI. Topologically, residues 335-370 are cytoplasmic; that stretch reads NPFVCIFSNRELRRCFSTTLLYCRKSRLPREPYCVI.

This sequence belongs to the G-protein coupled receptor 1 family. As to quaternary structure, interacts with DLG4 and DLG3.

It is found in the cell membrane. It localises to the endoplasmic reticulum. In terms of biological role, orphan receptor. This is Probable G-protein coupled receptor 85 (GPR85) from Pongo abelii (Sumatran orangutan).